The following is a 141-amino-acid chain: Hemoglobin subunit alpha-A (141 aa).

Positions 1–141 (VLSAADKNNV…VGNVLTAKYR (141 aa)) constitute a Globin domain. An O2-binding site is contributed by histidine 58. A heme b-binding site is contributed by histidine 87.

The protein belongs to the globin family. As to quaternary structure, heterotetramer of two alpha chains and two beta chains. As to expression, red blood cells.

Its function is as follows. Involved in oxygen transport from the lung to the various peripheral tissues. The sequence is that of Hemoglobin subunit alpha-A (HBAA) from Francolinus pondicerianus (Grey francolin).